The sequence spans 478 residues: tRNA modification GTPase MnmE (478 aa).

3 residues coordinate (6S)-5-formyl-5,6,7,8-tetrahydrofolate: R36, E94, and K133. Residues 230 to 402 (GIHVVLAGRP…LVETLCAKVG (173 aa)) enclose the TrmE-type G domain. Position 240 (N240) interacts with K(+). GTP-binding positions include 240–245 (NAGKSS), 259–265 (TDVAGTT), and 284–287 (DTAG). A Mg(2+)-binding site is contributed by S244. T259, V261, and T264 together coordinate K(+). T265 is a Mg(2+) binding site. K478 provides a ligand contact to (6S)-5-formyl-5,6,7,8-tetrahydrofolate.

This sequence belongs to the TRAFAC class TrmE-Era-EngA-EngB-Septin-like GTPase superfamily. TrmE GTPase family. Homodimer. Heterotetramer of two MnmE and two MnmG subunits. K(+) is required as a cofactor.

Its subcellular location is the cytoplasm. Exhibits a very high intrinsic GTPase hydrolysis rate. Involved in the addition of a carboxymethylaminomethyl (cmnm) group at the wobble position (U34) of certain tRNAs, forming tRNA-cmnm(5)s(2)U34. The chain is tRNA modification GTPase MnmE from Psychrobacter arcticus (strain DSM 17307 / VKM B-2377 / 273-4).